The chain runs to 374 residues: Lipid-A-disaccharide synthase (374 aa).

It belongs to the LpxB family.

The enzyme catalyses a lipid X + a UDP-2-N,3-O-bis[(3R)-3-hydroxyacyl]-alpha-D-glucosamine = a lipid A disaccharide + UDP + H(+). The protein operates within bacterial outer membrane biogenesis; LPS lipid A biosynthesis. Its function is as follows. Condensation of UDP-2,3-diacylglucosamine and 2,3-diacylglucosamine-1-phosphate to form lipid A disaccharide, a precursor of lipid A, a phosphorylated glycolipid that anchors the lipopolysaccharide to the outer membrane of the cell. The protein is Lipid-A-disaccharide synthase of Pseudomonas fluorescens (strain ATCC BAA-477 / NRRL B-23932 / Pf-5).